The primary structure comprises 468 residues: BTB/POZ domain-containing protein 17 (468 aa).

The signal sequence occupies residues 1-16 (MRRFCVVPLLLVLVEA). One can recognise a BTB domain in the interval 51 to 120 (TDTILRIRTA…FYCGEISVNL (70 aa)). Residues 159-259 (VVSWYHYALR…ISPSQLFQIQ (101 aa)) form the BACK domain.

The protein localises to the secreted. The polypeptide is BTB/POZ domain-containing protein 17 (btbd17) (Xenopus tropicalis (Western clawed frog)).